The chain runs to 584 residues: Protein FAM117B (584 aa).

Residues methionine 1 to threonine 214 form a disordered region. Serine 10 carries the phosphoserine modification. The segment covering threonine 53–glycine 79 has biased composition (gly residues). The span at proline 80–threonine 90 shows a compositional bias: low complexity. Residue serine 102 is modified to Phosphoserine. A compositionally biased stretch (low complexity) spans threonine 114–serine 132. The span at proline 133 to leucine 142 shows a compositional bias: pro residues. Positions threonine 145–threonine 154 are enriched in polar residues. Low complexity predominate over residues serine 204–threonine 214. A phosphoserine mark is found at serine 206, serine 215, serine 216, and serine 268. Disordered stretches follow at residues glycine 227–phenylalanine 461 and serine 551–glycine 584. The span at arginine 287 to aspartate 297 shows a compositional bias: basic residues. Serine 340 carries the post-translational modification Phosphoserine. Basic and acidic residues predominate over residues isoleucine 350–glutamine 361. Residues glutamine 379–proline 392 show a composition bias toward polar residues. Serine 386 is subject to Phosphoserine. Residues serine 399–serine 412 are compositionally biased toward low complexity. Serine 444 and serine 452 each carry phosphoserine.

The chain is Protein FAM117B (Fam117b) from Mus musculus (Mouse).